An 880-amino-acid chain; its full sequence is Alanine--tRNA ligase (880 aa).

4 residues coordinate Zn(2+): His-566, His-570, Cys-668, and His-672.

The protein belongs to the class-II aminoacyl-tRNA synthetase family. It depends on Zn(2+) as a cofactor.

It is found in the cytoplasm. The enzyme catalyses tRNA(Ala) + L-alanine + ATP = L-alanyl-tRNA(Ala) + AMP + diphosphate. Catalyzes the attachment of alanine to tRNA(Ala) in a two-step reaction: alanine is first activated by ATP to form Ala-AMP and then transferred to the acceptor end of tRNA(Ala). Also edits incorrectly charged Ser-tRNA(Ala) and Gly-tRNA(Ala) via its editing domain. This chain is Alanine--tRNA ligase, found in Trichormus variabilis (strain ATCC 29413 / PCC 7937) (Anabaena variabilis).